The primary structure comprises 619 residues: Translation initiation factor IF-2 (619 aa).

The region spanning 120–289 (PRPPIVTIMG…ILLLGEVEGY (170 aa)) is the tr-type G domain. The segment at 129-136 (GHVDHGKT) is G1. Residue 129-136 (GHVDHGKT) participates in GTP binding. Positions 154 to 158 (GITQK) are G2. A G3 region spans residues 176–179 (DTPG). Residues 176-180 (DTPGH) and 230-233 (NKMD) each bind GTP. Residues 230-233 (NKMD) form a G4 region. The segment at 266–268 (SAL) is G5.

This sequence belongs to the TRAFAC class translation factor GTPase superfamily. Classic translation factor GTPase family. IF-2 subfamily.

The protein resides in the cytoplasm. One of the essential components for the initiation of protein synthesis. Protects formylmethionyl-tRNA from spontaneous hydrolysis and promotes its binding to the 30S ribosomal subunits. Also involved in the hydrolysis of GTP during the formation of the 70S ribosomal complex. The polypeptide is Translation initiation factor IF-2 (infB) (Mycoplasma genitalium (strain ATCC 33530 / DSM 19775 / NCTC 10195 / G37) (Mycoplasmoides genitalium)).